We begin with the raw amino-acid sequence, 365 residues long: MKKEFKLAVLPGDGIGPEIMAEAMKVLDAVEQKFQVRFERQFANVGGAAIDRDGKALPDATVEICQASDAILFGSVGGPKWDTLPAEERPERGALLPLRRIFGLFCNLRPAIVFPALTSASSLKEEVIAGGFDILVVRELTGGIYFAQPKGVEGEGGERRGFDTMAYTDAEVERITRVAFDAARKRGKKLVSIDKANVLSTSVLWREVVERVSADYPDVVLSHMYVDNAAMQLVKAPKQFDVLLCPNMFGDILSDEAAMLTGSLGMLPSASLAEGSFGMYEPAGGSAPDIAGKNIANPVAQILSAAMLLRYSCGLADAADAVEKAVENCLAAGLRTGDIYQDADGEQLVSTSAMGDAVVAELIKS.

78-91 (GPKWDTLPAEERPE) provides a ligand contact to NAD(+). Residues Arg-99, Arg-109, Arg-138, and Asp-227 each contribute to the substrate site. Residues Asp-227, Asp-251, and Asp-255 each contribute to the Mg(2+) site. An NAD(+)-binding site is contributed by 285-297 (GSAPDIAGKNIAN).

This sequence belongs to the isocitrate and isopropylmalate dehydrogenases family. LeuB type 1 subfamily. Homodimer. Mg(2+) is required as a cofactor. Requires Mn(2+) as cofactor.

It is found in the cytoplasm. The catalysed reaction is (2R,3S)-3-isopropylmalate + NAD(+) = 4-methyl-2-oxopentanoate + CO2 + NADH. It functions in the pathway amino-acid biosynthesis; L-leucine biosynthesis; L-leucine from 3-methyl-2-oxobutanoate: step 3/4. In terms of biological role, catalyzes the oxidation of 3-carboxy-2-hydroxy-4-methylpentanoate (3-isopropylmalate) to 3-carboxy-4-methyl-2-oxopentanoate. The product decarboxylates to 4-methyl-2 oxopentanoate. This is 3-isopropylmalate dehydrogenase from Syntrophotalea carbinolica (strain DSM 2380 / NBRC 103641 / GraBd1) (Pelobacter carbinolicus).